A 144-amino-acid chain; its full sequence is MAKLSGSIDVPLPPEEAWMHASDLTRYREWLTIHKVWRSKLPEVLEKGTVVESYVEVKGMPNRIKWTIVRYKPPEGMTLNGDGVGGVKVKLIAKVAPKEHGSVVSFDVHLGGPALLGPIGMIVAAALRADIRESLQNFVTVFAG.

Functionally, toxic component of a type II toxin-antitoxin (TA) system. Its toxic effect is neutralized by coexpression with cognate antitoxin MT0933. This chain is Toxin MT0934, found in Mycobacterium tuberculosis (strain CDC 1551 / Oshkosh).